Consider the following 225-residue polypeptide: MANINFGFEHHASKLYSGAIEEGIQNSLVPMVIETSGRGERAFDIFSRLLRERIIFLGSGIDEHVAGLIMAQLIFLESEDPDRDIFIYVNSPGGSVSAGLGIYDTMQYIRPDVSTVCVGMAASMGAFLLASGAKGKRASLPHSRIMIHQPSGGAQGQESDIIIQAREIEKIRRLLEEIMAKHTGKDVQQVREDSERDRWMDAGEALEYGIIDQVFEKRPAPEKKD.

Catalysis depends on Ser123, which acts as the Nucleophile. His148 is an active-site residue.

It belongs to the peptidase S14 family. As to quaternary structure, fourteen ClpP subunits assemble into 2 heptameric rings which stack back to back to give a disk-like structure with a central cavity, resembling the structure of eukaryotic proteasomes.

Its subcellular location is the cytoplasm. The enzyme catalyses Hydrolysis of proteins to small peptides in the presence of ATP and magnesium. alpha-casein is the usual test substrate. In the absence of ATP, only oligopeptides shorter than five residues are hydrolyzed (such as succinyl-Leu-Tyr-|-NHMec, and Leu-Tyr-Leu-|-Tyr-Trp, in which cleavage of the -Tyr-|-Leu- and -Tyr-|-Trp bonds also occurs).. In terms of biological role, cleaves peptides in various proteins in a process that requires ATP hydrolysis. Has a chymotrypsin-like activity. Plays a major role in the degradation of misfolded proteins. The protein is ATP-dependent Clp protease proteolytic subunit of Chlorobium phaeovibrioides (strain DSM 265 / 1930) (Prosthecochloris vibrioformis (strain DSM 265)).